A 1001-amino-acid chain; its full sequence is Receptor-type tyrosine-protein phosphatase N2 (1001 aa).

An N-terminal signal peptide occupies residues 1 to 27 (MGPPLPLLLLLLLPPPLPRALPAPASA). An involved in localization to secretory granules; interaction with CPE region spans residues 1–407 (MGPPLPLLLL…PEGPLLEKSS (407 aa)). The Extracellular portion of the chain corresponds to 28 to 600 (RGRQLPGRLG…HQEEQEDSTK (573 aa)). Omega-N-methylarginine is present on R259. Disordered stretches follow at residues 271–296 (PFSATALSQRWPPPPGDAKDSPSMDD), 308–359 (QQNS…DAPE), and 394–459 (SPLL…LEDQ). The segment covering 312 to 325 (EVDRLGPLKEEKAD) has biased composition (basic and acidic residues). S339 is modified (phosphoserine). Positions 340-355 (QESHGRGAEGQPREQT) are enriched in basic and acidic residues. Positions 394–404 (SPLLPEGPLLE) are enriched in low complexity. Basic and acidic residues predominate over residues 405 to 416 (KSSREEIKKSEQ). The segment covering 417–428 (PEEVLSSEEETA) has biased composition (acidic residues). A phosphoserine mark is found at S422 and S423. Over residues 429–459 (GVEHVRSRTYSKDLFERKPNSEPQPRRLEDQ) the composition is skewed to basic and acidic residues. The N-linked (GlcNAc...) asparagine glycan is linked to N550. Residues 601–621 (FILLTFLSIACILGVLLASSL) traverse the membrane as a helical segment. Topologically, residues 622–1001 (AYCLRHNSHY…VNAILKALPQ (380 aa)) are cytoplasmic. The Tyrosine-based internalization motif signature appears at 652 to 661 (YQELCRQRMA). Residues 663-705 (RPQDRSEGPHTSRINSVSSQFSDGPMPSPSARSSTSSWSEEPV) are disordered. The segment covering 674–684 (SRINSVSSQFS) has biased composition (polar residues). 2 positions are modified to phosphoserine: S678 and S684. Positions 691–705 (PSARSSTSSWSEEPV) are enriched in low complexity. T697 is subject to Phosphothreonine. Positions 731–991 (LEKEWEALCA…EFALTAVAEE (261 aa)) constitute a Tyrosine-protein phosphatase domain. Substrate contacts are provided by residues D899 and 931 to 937 (CSDGAGR). The active-site Phosphocysteine intermediate is C931. Position 956 is an N6-acetyllysine (K956). Q976 serves as a coordination point for substrate. The Leucine-based sorting signal signature appears at 990 to 996 (EEVNAIL).

Belongs to the protein-tyrosine phosphatase family. In terms of assembly, self-associates. Interacts (via cytoplasmic domain) with PTPRN (via cytoplasmic domain). Interacts (precursor form) with CPE. Interacts with HAP1 isoform A. Interacts with AP2A1 or AP2A2 and AP1G1; indicative for an association with adaptor protein complex 2 (AP-2) and adaptor protein complex 1 (AP-1). Interacts with AP2M1; indicative for an association with adaptor protein complex 2 (AP-2). Interacts with MYO5A. Subject to proteolytic cleavage at multiple sites during maturation of secretory granules. In the brain at least IA-2beta71, IA-2beta64 and IA-2beta60 have been detected, in the pancreas and a pancreatic beta cell line only IA-2beta60 has been detected. As to expression, detected in brain. Detected in pancreas islets (at protein level). Detected in pancreas and brain.

The protein resides in the cytoplasmic vesicle. Its subcellular location is the secretory vesicle membrane. It is found in the secretory vesicle. The protein localises to the synaptic vesicle membrane. The enzyme catalyses O-phospho-L-tyrosyl-[protein] + H2O = L-tyrosyl-[protein] + phosphate. Functionally, plays a role in vesicle-mediated secretory processes. Required for normal accumulation of secretory vesicles in hippocampus, pituitary and pancreatic islets. Required for the accumulation of normal levels of insulin-containing vesicles and preventing their degradation. Plays a role in insulin secretion in response to glucose stimuli. Required for normal accumulation of the neurotransmitters norepinephrine, dopamine and serotonin in the brain. In females, but not in males, required for normal accumulation and secretion of pituitary hormones, such as luteinizing hormone (LH) and follicle-stimulating hormone (FSH). Required to maintain normal levels of renin expression and renin release. May regulate catalytic active protein-tyrosine phosphatases such as PTPRA through dimerization. Has phosphatidylinositol phosphatase activity; the PIPase activity is involved in its ability to regulate insulin secretion. Can dephosphorylate phosphatidylinositol 4,5-biphosphate (PI(4,5)P2), phosphatidylinositol 5-phosphate and phosphatidylinositol 3-phosphate. Regulates PI(4,5)P2 level in the plasma membrane and localization of cofilin at the plasma membrane and thus is indirectly involved in regulation of actin dynamics related to cell migration and metastasis; upon hydrolysis of PI(4,5)P2 cofilin is released from the plasma membrane and acts in the cytoplasm in severing F-actin filaments. This chain is Receptor-type tyrosine-protein phosphatase N2 (Ptprn2), found in Mus musculus (Mouse).